We begin with the raw amino-acid sequence, 1016 residues long: KN motif and ankyrin repeat domain-containing protein 4 (1016 aa).

Disordered regions lie at residues 1 to 26 (MEKIDGKDQSSQGDEEKEPPKSYPYS), 70 to 91 (PRNFSLPNSGDRTYAVPPQQNW), 235 to 259 (AEPEEGDLKASSHLSQPGPSSAVQS), 401 to 485 (LSQE…LPRG), 506 to 563 (EEGS…SPQD), and 622 to 755 (AQAP…VSHL). Polar residues-rich tracts occupy residues 70–80 (PRNFSLPNSGD) and 246–258 (SHLSQPGPSSAVQ). Residues 346-409 (SSLKNQVLAL…KLSQERASEA (64 aa)) adopt a coiled-coil conformation. Basic and acidic residues-rich tracts occupy residues 401-414 (LSQERASEAPDRTD) and 445-454 (PECRAPRAEK). A compositionally biased stretch (polar residues) spans 460 to 469 (VQNNHKQSYP). Residues 632-650 (TPAPPPSTPPPPPPPPPEI) show a composition bias toward pro residues. At Thr639 the chain carries Phosphothreonine. A compositionally biased stretch (acidic residues) spans 695 to 708 (TSGEDSSPEDLSDS). Composition is skewed to basic and acidic residues over residues 709–727 (ETEKKQDCSESREDRDLHP) and 745–755 (TSDRGEEVSHL). ANK repeat units lie at residues 838-868 (SGNTALHYSVSHSNFAIVKLLLDTGVCNVDH), 877-905 (VMITPLASAETKEDMAVVWKLLREGNVNI), 910-939 (GGQTALMLGVSHDREDMVQALLSCQADVNL), 943-973 (DGSSALMLACHQGNADLVRLLLAHPACNSSL), and 977-1007 (AGRTALSLVLNSPAHVEIAELLRAHSEPGRS).

Its subcellular location is the cytoplasm. May be involved in the control of cytoskeleton formation by regulating actin polymerization. This is KN motif and ankyrin repeat domain-containing protein 4 (Kank4) from Mus musculus (Mouse).